Consider the following 260-residue polypeptide: 5-oxoprolinase subunit A 2 (260 aa).

This sequence belongs to the LamB/PxpA family. In terms of assembly, forms a complex composed of PxpA, PxpB and PxpC.

The enzyme catalyses 5-oxo-L-proline + ATP + 2 H2O = L-glutamate + ADP + phosphate + H(+). In terms of biological role, catalyzes the cleavage of 5-oxoproline to form L-glutamate coupled to the hydrolysis of ATP to ADP and inorganic phosphate. The chain is 5-oxoprolinase subunit A 2 from Ralstonia nicotianae (strain ATCC BAA-1114 / GMI1000) (Ralstonia solanacearum).